The following is a 526-amino-acid chain: Alpha-ketoglutaric semialdehyde dehydrogenase (526 aa).

NADP(+) contacts are provided by residues 159–160 (SN), 185–188 (KAHS), and 240–241 (GS). Glutamate 264 functions as the Proton acceptor in the catalytic mechanism. Residue cysteine 301 is the Nucleophile of the active site. Glutamate 393 is an NADP(+) binding site.

It belongs to the aldehyde dehydrogenase family.

It carries out the reaction 2,5-dioxopentanoate + NADP(+) + H2O = 2-oxoglutarate + NADPH + 2 H(+). It participates in carbohydrate acid metabolism; D-glucarate degradation. Catalyzes the NAD(P)(+)-dependent oxidation of alpha-ketoglutaric semialdehyde (alphaKGSA) to alpha-ketoglutarate in the D-glutarate degradation pathway. This is Alpha-ketoglutaric semialdehyde dehydrogenase from Acinetobacter baylyi (strain ATCC 33305 / BD413 / ADP1).